We begin with the raw amino-acid sequence, 478 residues long: MRVLFVASEAHPFIKSGGLGDVAGALPKELARKGVDVRVVIPKYREINNELKNKLRFNKWFNVDVGWRNQYCGILEYEYDGVIYYFVDNEYYFSRGGMYGHYDDAERFAFFDRAVLDMIKQLDWKPNIIHCNDWQTGMIPVLLKLEYMRKDMFYWDIKSVFSIHNIAFQGVFDPVILPELFGYDYEQYTNTNLKFDDGVGFMKGAINYSDMITTVSYSYAEEIKTPEFGERLDWLLREKSYMLRGILNGIDYDEFNPKNDNLINKNYDVNNINDKYENKRNLQSELGLNVNENIPIIAMVTRLTSQKGLDLLVNISERLLQNDIQLVIVGTGDKHYEDHFKWLDYKYGNKVSANIRFDNNLAHKVYAASDMFLMPSLFEPCGLGQLIALRYGSIPIVRETGGLKDTIRAYNEYTGEGNGFSFYNYNADELLHIIEYALKIYYDKNKWSNLVKNAMNSNNSWSKSADEYLNMYKELSYR.

Lysine 15 is a binding site for ADP-alpha-D-glucose.

It belongs to the glycosyltransferase 1 family. Bacterial/plant glycogen synthase subfamily.

It carries out the reaction [(1-&gt;4)-alpha-D-glucosyl](n) + ADP-alpha-D-glucose = [(1-&gt;4)-alpha-D-glucosyl](n+1) + ADP + H(+). The protein operates within glycan biosynthesis; glycogen biosynthesis. Its function is as follows. Synthesizes alpha-1,4-glucan chains using ADP-glucose. This Clostridium botulinum (strain Alaska E43 / Type E3) protein is Glycogen synthase.